The primary structure comprises 260 residues: Hemin import ATP-binding protein HmuV (260 aa).

Residues 2–239 (IRAENITLIR…ETIARVYGIG (238 aa)) enclose the ABC transporter domain. 34–41 (GPNGAGKS) serves as a coordination point for ATP.

The protein belongs to the ABC transporter superfamily. Heme (hemin) importer (TC 3.A.1.14.5) family. As to quaternary structure, the complex is composed of two ATP-binding proteins (HmuV), two transmembrane proteins (HmuU) and a solute-binding protein (HmuT).

Its subcellular location is the cell inner membrane. In terms of biological role, part of the ABC transporter complex HmuTUV involved in hemin import. Responsible for energy coupling to the transport system. The sequence is that of Hemin import ATP-binding protein HmuV from Agrobacterium fabrum (strain C58 / ATCC 33970) (Agrobacterium tumefaciens (strain C58)).